Consider the following 222-residue polypeptide: Small ribosomal subunit protein uS2 (222 aa).

Belongs to the universal ribosomal protein uS2 family.

This chain is Small ribosomal subunit protein uS2, found in Karelsulcia muelleri (strain GWSS) (Sulcia muelleri).